A 910-amino-acid polypeptide reads, in one-letter code: MVGTCHSMAASRSTRVTRSTVGLNGLDESFCGRTLRNRSIAHPEEISSHSQVRSRSPKKRAEPVPTQKGTNNGRTSDVRQQSARDSWVSPRKRRLSSSEKDDLERQALESCERRQAEPAPPVFKNIKRCLRAEATNSSEEDSPVKPDKEPGEHRRIVVDHDADFQGAKRACRCLILDDCEKREVKKVNVSEEGPLNAAVVEEITGYLTVNGVDDSDSAVINCDDCQPDGNTKQNNPGSCVLQEESVAGDGDSETQTSVFCGSRKEDSCIDHFVPCTKSDVQVKLEDHKLVTACLPVERRNQLTAESASGPVSEIQSSLRDSEEEVDVVGDSSASKEQCNENSSNPLDTGSERMPVSGEPELSSILDCVSAQMTSLSEPQEHRYTLRTSPRRAALARSSPTKTTSPYRENGQLEETNLSPQETNTTVSDHVSESPTDPAEVPQDGKVLCCDSENYGSEGLSKPPSEARVNIGHLPSAKESASQHTAEEEDDDPDVYYFESDHVALKHNKDYQRLLQTIAVLEAQRSQAVQDLESLGKHQREALKNPIGFVEKLQKKADIGLPYPQRVVQLPEIMWDQYTNSLGNFEREFKHRKRHTRRVKLVFDKVGLPARPKSPLDPKKDGESLSYSMLPLSDGPEGSHNRPQMIRGRLCDDSKPETFNQLWTVEEQKKLEQLLLKYPPEEVESRRWQKIADELGNRTAKQVASRVQKYFIKLTKAGIPVPGRTPNLYIYSRKSSTSRRQHPLNKHLFKPSTFMTSHEPPVYMDEDDDRSCLHSHMSTAAEEASDEESIPIIYRSLPEYKELLQFKKLKKQKLQQMQAESGFVQHVGFKCDNCGVEPIQGVRWHCQDCPPEMSLDFCDSCSDCPHETDIHKEDHQLEPVYKSETFLDRDYCVSQGTSYSYLDPNYFPANR.

Disordered regions lie at residues 41-117 (AHPE…RQAE) and 133-153 (EATNSSEEDSPVKPDKEPGEH). Positions 67-84 (QKGTNNGRTSDVRQQSAR) are enriched in polar residues. Phosphoserine occurs at positions 89, 96, 137, 138, and 142. A compositionally biased stretch (basic and acidic residues) spans 96–116 (SSSEKDDLERQALESCERRQA). Residues 142 to 153 (SPVKPDKEPGEH) are compositionally biased toward basic and acidic residues. Residue Lys-283 forms a Glycyl lysine isopeptide (Lys-Gly) (interchain with G-Cter in SUMO2) linkage. 3 disordered regions span residues 303-358 (TAES…VSGE), 373-444 (TSLS…PQDG), and 609-641 (ARPKSPLDPKKDGESLSYSMLPLSDGPEGSHNR). Polar residues-rich tracts occupy residues 331–347 (SSASKEQCNENSSNPLD) and 397–434 (SSPTKTTSPYRENGQLEETNLSPQETNTTVSDHVSESP). Lys-401 carries the post-translational modification N6-acetyllysine. Residue Ser-613 is modified to Phosphoserine. Positions 613–622 (SPLDPKKDGE) are enriched in basic and acidic residues. A Glycyl lysine isopeptide (Lys-Gly) (interchain with G-Cter in SUMO2) cross-link involves residue Lys-654. Residues 654–714 (KPETFNQLWT…RVQKYFIKLT (61 aa)) form the HTH myb-type domain. The segment at residues 687 to 710 (WQKIADELGNRTAKQVASRVQKYF) is a DNA-binding region (H-T-H motif). Residue Lys-708 is modified to N6-acetyllysine. A Glycyl lysine isopeptide (Lys-Gly) (interchain with G-Cter in SUMO2) cross-link involves residue Lys-715. A ZZ-type zinc finger spans residues 825 to 884 (HVGFKCDNCGVEPIQGVRWHCQDCPPEMSLDFCDSCSDCPHETDIHKEDHQLEPVYKSET). 8 residues coordinate Zn(2+): Cys-830, Cys-833, Cys-845, Cys-848, Cys-857, Cys-860, His-870, and His-874.

As to quaternary structure, component of the ADA2A-containing complex (ATAC), composed of KAT14, KAT2A, TADA2L, TADA3L, ZZ3, MBIP, WDR5, YEATS2, CCDC101 and DR1. Interacts via (ZZ-type zinc finger) with histone H3 in a methylation-independent manner and acetylation on 'Lys-4' (H3K4ac) moderately enhances the interaction.

It localises to the nucleus. In terms of biological role, histone H3 reader that is required for the ATAC complex-mediated maintenance of histone acetylation and gene activation. Component of the ATAC complex, a complex with histone acetyltransferase activity on histones H3 and H4. This chain is ZZ-type zinc finger-containing protein 3 (Zzz3), found in Mus musculus (Mouse).